Here is a 126-residue protein sequence, read N- to C-terminus: Protein FMP49, mitochondrial (126 aa).

It is found in the mitochondrion. The chain is Protein FMP49, mitochondrial from Saccharomyces cerevisiae (strain ATCC 204508 / S288c) (Baker's yeast).